The sequence spans 185 residues: ATP-dependent protease subunit HslV (185 aa).

Thr12 is a catalytic residue. Residues Ala168, Cys171, and Thr174 each contribute to the Na(+) site.

Belongs to the peptidase T1B family. HslV subfamily. As to quaternary structure, a double ring-shaped homohexamer of HslV is capped on each side by a ring-shaped HslU homohexamer. The assembly of the HslU/HslV complex is dependent on binding of ATP.

Its subcellular location is the cytoplasm. The catalysed reaction is ATP-dependent cleavage of peptide bonds with broad specificity.. Allosterically activated by HslU binding. Its function is as follows. Protease subunit of a proteasome-like degradation complex believed to be a general protein degrading machinery. This chain is ATP-dependent protease subunit HslV, found in Cereibacter sphaeroides (strain ATCC 17023 / DSM 158 / JCM 6121 / CCUG 31486 / LMG 2827 / NBRC 12203 / NCIMB 8253 / ATH 2.4.1.) (Rhodobacter sphaeroides).